Here is a 604-residue protein sequence, read N- to C-terminus: ATP-dependent RNA helicase dbp6 (604 aa).

The span at 1 to 16 (MSVEVDKSSHSKPKIE) shows a compositional bias: basic and acidic residues. 2 disordered regions span residues 1–37 (MSVEVDKSSHSKPKIEKKSKRNKRKWLNDENKTHVTA) and 51–70 (FSQAAQQALKQSRKEDNERD). Positions 51 to 60 (FSQAAQQALK) are enriched in low complexity. Residues 149 to 157 (GFAVQAAVL) carry the Q motif motif. Positions 167 to 379 (GPMYSYGGDV…SLKLHNPRLV (213 aa)) constitute a Helicase ATP-binding domain. An ATP-binding site is contributed by 180-187 (AATGSGKT). A DEAD box motif is present at residues 292–295 (DEAD). A Helicase C-terminal domain is found at 406–573 (TLQEYHVSVS…RIKIEFSHIS (168 aa)).

This sequence belongs to the DEAD box helicase family. DDX51/DBP6 subfamily. In terms of assembly, associated with pre-ribosomal particles.

It is found in the nucleus. The protein resides in the nucleolus. It catalyses the reaction ATP + H2O = ADP + phosphate + H(+). ATP-binding RNA helicase involved in the biogenesis of 60S ribosomal subunits and is required for the normal formation of 25S and 5.8S rRNAs. In Schizosaccharomyces pombe (strain 972 / ATCC 24843) (Fission yeast), this protein is ATP-dependent RNA helicase dbp6 (dbp6).